The sequence spans 468 residues: ATP synthase subunit beta (468 aa).

155-162 contributes to the ATP binding site; that stretch reads GGAGVGKT.

The protein belongs to the ATPase alpha/beta chains family. In terms of assembly, F-type ATPases have 2 components, CF(1) - the catalytic core - and CF(0) - the membrane proton channel. CF(1) has five subunits: alpha(3), beta(3), gamma(1), delta(1), epsilon(1). CF(0) has three main subunits: a(1), b(2) and c(9-12). The alpha and beta chains form an alternating ring which encloses part of the gamma chain. CF(1) is attached to CF(0) by a central stalk formed by the gamma and epsilon chains, while a peripheral stalk is formed by the delta and b chains.

The protein resides in the cell inner membrane. The enzyme catalyses ATP + H2O + 4 H(+)(in) = ADP + phosphate + 5 H(+)(out). Its function is as follows. Produces ATP from ADP in the presence of a proton gradient across the membrane. The catalytic sites are hosted primarily by the beta subunits. This is ATP synthase subunit beta from Thermotoga neapolitana (strain ATCC 49049 / DSM 4359 / NBRC 107923 / NS-E).